The primary structure comprises 2531 residues: Talin (2531 aa).

Positions 87 to 401 (RPLRVRMMDE…GYIDIILKKK (315 aa)) constitute an FERM domain. The segment at 598 to 621 (GEKLLEAARGLAGAVRHLLKSAEP) is interaction with VIN1. The I/LWEQ domain maps to 2287–2526 (TDWVDPSDPN…KIRHDKYKRH (240 aa)). Positions 2466–2485 (AAKRSSEEGDDEEVSGGGQE) are disordered.

In terms of assembly, interacts with VIN1 (vinculin); the interaction facilitates VIN1 binding to F-actin.

The protein resides in the cytoplasm. Its subcellular location is the cytoskeleton. The protein localises to the cell cortex. Its function is as follows. Probably involved in connections of major cytoskeletal structures to the plasma membrane. The polypeptide is Talin (Oscarella pearsei (Sponge)).